A 308-amino-acid chain; its full sequence is 4-hydroxy-3-methylbut-2-enyl diphosphate reductase (308 aa).

Cys12 contributes to the [4Fe-4S] cluster binding site. (2E)-4-hydroxy-3-methylbut-2-enyl diphosphate contacts are provided by His41 and His74. Dimethylallyl diphosphate is bound by residues His41 and His74. His41 and His74 together coordinate isopentenyl diphosphate. Cys96 contributes to the [4Fe-4S] cluster binding site. Residue His124 participates in (2E)-4-hydroxy-3-methylbut-2-enyl diphosphate binding. Dimethylallyl diphosphate is bound at residue His124. An isopentenyl diphosphate-binding site is contributed by His124. The active-site Proton donor is the Glu126. Thr166 is a binding site for (2E)-4-hydroxy-3-methylbut-2-enyl diphosphate. Cys196 contributes to the [4Fe-4S] cluster binding site. 4 residues coordinate (2E)-4-hydroxy-3-methylbut-2-enyl diphosphate: Ser224, Ser225, Asn226, and Ser268. Positions 224, 225, 226, and 268 each coordinate dimethylallyl diphosphate. 4 residues coordinate isopentenyl diphosphate: Ser224, Ser225, Asn226, and Ser268.

Belongs to the IspH family. Requires [4Fe-4S] cluster as cofactor.

It catalyses the reaction isopentenyl diphosphate + 2 oxidized [2Fe-2S]-[ferredoxin] + H2O = (2E)-4-hydroxy-3-methylbut-2-enyl diphosphate + 2 reduced [2Fe-2S]-[ferredoxin] + 2 H(+). It carries out the reaction dimethylallyl diphosphate + 2 oxidized [2Fe-2S]-[ferredoxin] + H2O = (2E)-4-hydroxy-3-methylbut-2-enyl diphosphate + 2 reduced [2Fe-2S]-[ferredoxin] + 2 H(+). The protein operates within isoprenoid biosynthesis; dimethylallyl diphosphate biosynthesis; dimethylallyl diphosphate from (2E)-4-hydroxy-3-methylbutenyl diphosphate: step 1/1. It functions in the pathway isoprenoid biosynthesis; isopentenyl diphosphate biosynthesis via DXP pathway; isopentenyl diphosphate from 1-deoxy-D-xylulose 5-phosphate: step 6/6. In terms of biological role, catalyzes the conversion of 1-hydroxy-2-methyl-2-(E)-butenyl 4-diphosphate (HMBPP) into a mixture of isopentenyl diphosphate (IPP) and dimethylallyl diphosphate (DMAPP). Acts in the terminal step of the DOXP/MEP pathway for isoprenoid precursor biosynthesis. The polypeptide is 4-hydroxy-3-methylbut-2-enyl diphosphate reductase (Vesicomyosocius okutanii subsp. Calyptogena okutanii (strain HA)).